A 150-amino-acid polypeptide reads, in one-letter code: Phosphopantetheine adenylyltransferase (150 aa).

A substrate-binding site is contributed by S10. Residues 10-11 (SF) and H18 each bind ATP. Positions 42, 74, and 88 each coordinate substrate. ATP is bound by residues 89-91 (GLR), E99, and 124-130 (LAYISSS).

Belongs to the bacterial CoaD family. Homohexamer. Mg(2+) serves as cofactor.

It localises to the cytoplasm. The enzyme catalyses (R)-4'-phosphopantetheine + ATP + H(+) = 3'-dephospho-CoA + diphosphate. Its pathway is cofactor biosynthesis; coenzyme A biosynthesis; CoA from (R)-pantothenate: step 4/5. Reversibly transfers an adenylyl group from ATP to 4'-phosphopantetheine, yielding dephospho-CoA (dPCoA) and pyrophosphate. In Cytophaga hutchinsonii (strain ATCC 33406 / DSM 1761 / CIP 103989 / NBRC 15051 / NCIMB 9469 / D465), this protein is Phosphopantetheine adenylyltransferase.